A 306-amino-acid chain; its full sequence is Protein-methionine-sulfoxide reductase catalytic subunit MsrP (306 aa).

A signal peptide (tat-type signal) is located at residues 1–45 (MLIRHAPDLTDNDVTDHSLYLKRRTLMAGVAGLGVAGASASHAQA). Mo-molybdopterin-binding positions include Asn69, 72–73 (YE), Cys127, Thr162, Asn210, Arg215, and 226–228 (GIK).

It belongs to the MsrP family. As to quaternary structure, heterodimer of a catalytic subunit (MsrP) and a heme-binding subunit (MsrQ). The cofactor is Mo-molybdopterin. Predicted to be exported by the Tat system. The position of the signal peptide cleavage has not been experimentally proven.

It is found in the periplasm. The catalysed reaction is L-methionyl-[protein] + a quinone + H2O = L-methionyl-(S)-S-oxide-[protein] + a quinol. It carries out the reaction L-methionyl-[protein] + a quinone + H2O = L-methionyl-(R)-S-oxide-[protein] + a quinol. Its function is as follows. Part of the MsrPQ system that repairs oxidized periplasmic proteins containing methionine sulfoxide residues (Met-O), using respiratory chain electrons. Thus protects these proteins from oxidative-stress damage caused by reactive species of oxygen and chlorine generated by the host defense mechanisms. MsrPQ is essential for the maintenance of envelope integrity under bleach stress, rescuing a wide series of structurally unrelated periplasmic proteins from methionine oxidation. The catalytic subunit MsrP is non-stereospecific, being able to reduce both (R-) and (S-) diastereoisomers of methionine sulfoxide. This Caulobacter vibrioides (strain ATCC 19089 / CIP 103742 / CB 15) (Caulobacter crescentus) protein is Protein-methionine-sulfoxide reductase catalytic subunit MsrP.